We begin with the raw amino-acid sequence, 693 residues long: Elongation factor G (693 aa).

The tr-type G domain maps to 8-282 (EKFRNFGIMA…AVVDYLPSPI (275 aa)). Residues 17–24 (AHIDAGKT), 81–85 (DTPGH), and 135–138 (NKMD) each bind GTP.

This sequence belongs to the TRAFAC class translation factor GTPase superfamily. Classic translation factor GTPase family. EF-G/EF-2 subfamily.

Its subcellular location is the cytoplasm. Its function is as follows. Catalyzes the GTP-dependent ribosomal translocation step during translation elongation. During this step, the ribosome changes from the pre-translocational (PRE) to the post-translocational (POST) state as the newly formed A-site-bound peptidyl-tRNA and P-site-bound deacylated tRNA move to the P and E sites, respectively. Catalyzes the coordinated movement of the two tRNA molecules, the mRNA and conformational changes in the ribosome. The protein is Elongation factor G of Mycoplasmoides gallisepticum (strain R(low / passage 15 / clone 2)) (Mycoplasma gallisepticum).